Here is a 122-residue protein sequence, read N- to C-terminus: uncharacterized protein (122 aa).

Helical transmembrane passes span 7–27, 29–49, 62–82, and 89–109; these read IVAI…IFCD, LVLA…LGWI, AITG…SKNP, and KEIF…YFGY.

The protein resides in the cell membrane. This is an uncharacterized protein from Methanocaldococcus jannaschii (strain ATCC 43067 / DSM 2661 / JAL-1 / JCM 10045 / NBRC 100440) (Methanococcus jannaschii).